The chain runs to 285 residues: sn-2 palmitoyl-lipid 9-desaturase (285 aa).

The next 2 helical transmembrane spans lie at 20–40 (WINVVFFGVFHALALLSPWFF) and 44–64 (ALGLLVFLHWLFGSIGICLGY). Positions 65 to 70 (HRLLSH) match the Histidine box-1 motif. Residues 81-101 (YAIALIGALALQGGPIFWVGG) traverse the membrane as a helical segment. Residues 102–106 (HRQHH) carry the Histidine box-2 motif. The helical transmembrane segment at 169–189 (IPFALLLYVLGGWPFVFYGVF) threads the bilayer. The Histidine box-3 motif lies at 239-243 (HHTYP).

Belongs to the fatty acid desaturase type 2 family. Requires Fe(2+) as cofactor.

The protein localises to the membrane. It carries out the reaction a 1-acyl-2-hexadecanoyl-glycerolipid + 2 reduced [2Fe-2S]-[ferredoxin] + O2 + 2 H(+) = a 1-acyl-2-[(9Z)-hexadecenoyl]-glycerolipid + 2 oxidized [2Fe-2S]-[ferredoxin] + 2 H2O. It participates in lipid metabolism; fatty acid biosynthesis. Desaturase involved in fatty acid biosynthesis. Introduces a double bond at carbon 9 of palmitoyl groups (16:0) attached to the sn-2 position of the glycerol moiety of membrane glycerolipids. The sequence is that of sn-2 palmitoyl-lipid 9-desaturase from Nostoc sp. (strain 36).